The following is a 574-amino-acid chain: Lipase maturation factor 1 (574 aa).

Positions 1–39 are disordered; the sequence is MRPDSLVMAAPEGSLRKRKVGGAEHSPASQPSLARDPAD. Over 1 to 49 the chain is Cytoplasmic; it reads MRPDSLVMAAPEGSLRKRKVGGAEHSPASQPSLARDPADSPARLHTGTF. A helical membrane pass occupies residues 50-72; that stretch reads WLTRIVLLRALAFIYFVAFLVAF. The Lumenal portion of the chain corresponds to 73–127; that stretch reads NQNKALIGDRGLLPCKLYLKNVQEYFQGSTGWAAWTYAPTIMWLLDWSDMNFNLD. The chain crosses the membrane as a helical span at residues 128 to 151; that stretch reads LIALLGLGISSFVLVTGCANMILM. Residues 152–207 are Cytoplasmic-facing; it reads TALWALYMSLVNVGQIWYSFGWESQLLETGFLGIFLSPLWTLSRLPKNTPTSQIVL. A helical transmembrane segment spans residues 208 to 221; that stretch reads WGFRWLIFRIMLGA. Over 222–292 the chain is Lumenal; the sequence is GLIKVRGDKC…LGRRMRILHG (71 aa). A helical membrane pass occupies residues 293 to 321; sequence VLQILFQVILIISGNLSFLNWLTIVPSLA. The Cytoplasmic portion of the chain corresponds to 322-367; that stretch reads CFDDAALGFLFPSGPQGLKKQVLEIQREDTQRVQPKPRDRGCLVRQ. The chain crosses the membrane as a helical span at residues 368 to 388; it reads VVNISLGILVAWLSVPVVINL. Over 389–574 the chain is Lumenal; the sequence is LSSRQIMNTS…LPEPPSRHTR (186 aa).

Belongs to the lipase maturation factor family. In terms of assembly, interacts with LPL and SEL1L. In terms of tissue distribution, expressed in all tissues synthesizing lipoprotein lipase (Lpl) and hepatic lipase (Lipc), including adipose tissue, skeletal muscle, heart, and liver. Expressed at higher levels in tissues that express little or no lipase activity such as testis and pancreas suggesting additional functions in these tissues.

It is found in the endoplasmic reticulum membrane. In terms of biological role, involved in the maturation of specific proteins in the endoplasmic reticulum. Required for maturation and transport of active lipoprotein lipase (LPL) through the secretory pathway. Each LMF1 molecule chaperones 50 or more molecules of LPL. The polypeptide is Lipase maturation factor 1 (Lmf1) (Mus musculus (Mouse)).